We begin with the raw amino-acid sequence, 692 residues long: UvrABC system protein C (692 aa).

Residues 16-95 (ETPGVYRFRD…IKEFDPRFNV (80 aa)) form the GIY-YIG domain. In terms of domain architecture, UVR spans 208 to 243 (GRYLRRLEREMRAAAEAQEYERAARLRDDIGALRRA). A disordered region spans residues 492-511 (GELEEYPGAPTGDDEAPETG).

Belongs to the UvrC family. Interacts with UvrB in an incision complex.

The protein localises to the cytoplasm. Its function is as follows. The UvrABC repair system catalyzes the recognition and processing of DNA lesions. UvrC both incises the 5' and 3' sides of the lesion. The N-terminal half is responsible for the 3' incision and the C-terminal half is responsible for the 5' incision. The sequence is that of UvrABC system protein C from Parafrankia sp. (strain EAN1pec).